Reading from the N-terminus, the 64-residue chain is MARRDDLTGLGPLAGNNRSHALNITKRRWNLNLQKVKVKTDRGTLTVKVSARTIRTLRKLDLLA.

This sequence belongs to the bacterial ribosomal protein bL28 family.

This is Large ribosomal subunit protein bL28 from Mycoplasmoides gallisepticum (strain R(low / passage 15 / clone 2)) (Mycoplasma gallisepticum).